The following is a 97-amino-acid chain: Large ribosomal subunit protein bL28 (97 aa).

This sequence belongs to the bacterial ribosomal protein bL28 family.

The sequence is that of Large ribosomal subunit protein bL28 from Rickettsia rickettsii (strain Iowa).